The chain runs to 276 residues: Radial spoke head protein 9 homolog (276 aa).

This sequence belongs to the flagellar radial spoke RSP9 family. As to quaternary structure, component of the axonemal radial spoke 1 (RS1) and 2 (RS2) complexes, at least composed of spoke head proteins RSPH1, RSPH3, RSPH9 and the cilia-specific component RSPH4A or sperm-specific component RSPH6A, spoke stalk proteins RSPH14, DNAJB13, DYDC1, ROPN1L and NME5, and the RS1 complex-specific anchor protein IQUB. Interacts with IQUB. Interacts with RSPH3B. Interacts with RSPH4A. Interacts with RSPH6A. Interacts with CFAP61. Interacts with LRRC23. Expressed in the testis, trachea, lung, oviduct and ependymal cells (at protein level).

The protein localises to the cytoplasm. Its subcellular location is the cytoskeleton. It is found in the cilium axoneme. It localises to the flagellum axoneme. The protein resides in the cell projection. The protein localises to the kinocilium. Functions as part of axonemal radial spoke complexes that play an important part in the motility of sperm and cilia. Essential for both the radial spoke head assembly and the central pair microtubule stability in ependymal motile cilia. Required for motility of olfactory and neural cilia and for the structural integrity of ciliary axonemes in both 9+0 and 9+2 motile cilia. In Mus musculus (Mouse), this protein is Radial spoke head protein 9 homolog (Rsph9).